The following is a 310-amino-acid chain: Ribonuclease Z (310 aa).

5 residues coordinate Zn(2+): His-61, His-63, Asp-65, His-66, and His-139. Asp-65 (proton acceptor) is an active-site residue. The disordered stretch occupies residues Glu-150–Arg-175. Residues Arg-153–Glu-164 are compositionally biased toward basic and acidic residues. Residues Asp-210 and His-268 each contribute to the Zn(2+) site.

Belongs to the RNase Z family. As to quaternary structure, homodimer. Zn(2+) is required as a cofactor.

It catalyses the reaction Endonucleolytic cleavage of RNA, removing extra 3' nucleotides from tRNA precursor, generating 3' termini of tRNAs. A 3'-hydroxy group is left at the tRNA terminus and a 5'-phosphoryl group is left at the trailer molecule.. Zinc phosphodiesterase, which displays some tRNA 3'-processing endonuclease activity. Probably involved in tRNA maturation, by removing a 3'-trailer from precursor tRNA. The chain is Ribonuclease Z from Halorubrum lacusprofundi (strain ATCC 49239 / DSM 5036 / JCM 8891 / ACAM 34).